Consider the following 285-residue polypeptide: tRNA pseudouridine synthase B (285 aa).

The active-site Nucleophile is aspartate 40.

It belongs to the pseudouridine synthase TruB family. Type 1 subfamily.

It catalyses the reaction uridine(55) in tRNA = pseudouridine(55) in tRNA. Responsible for synthesis of pseudouridine from uracil-55 in the psi GC loop of transfer RNAs. This chain is tRNA pseudouridine synthase B, found in Caldanaerobacter subterraneus subsp. tengcongensis (strain DSM 15242 / JCM 11007 / NBRC 100824 / MB4) (Thermoanaerobacter tengcongensis).